Consider the following 169-residue polypeptide: PTS system glucose-specific EIIA component (169 aa).

Residues 39–143 form the PTS EIIA type-1 domain; that stretch reads DVVFAEKIVG…STLTPVVISN (105 aa). Positions 76 and 91 each coordinate Zn(2+). H91 serves as the catalytic Tele-phosphohistidine intermediate; for EIIA activity. H91 is subject to Phosphohistidine; by HPr.

In terms of assembly, heterodimer with glycerol kinase (glpk). Zn(2+) serves as cofactor.

The protein localises to the cytoplasm. Its function is as follows. The phosphoenolpyruvate-dependent sugar phosphotransferase system (sugar PTS), a major carbohydrate active transport system, catalyzes the phosphorylation of incoming sugar substrates concomitantly with their translocation across the cell membrane. The enzyme II complex composed of PtsG and Crr is involved in glucose transport. The polypeptide is PTS system glucose-specific EIIA component (crr) (Salmonella typhi).